Reading from the N-terminus, the 72-residue chain is MSKDDVIEMQGTVLESLPNAMFEVELESGHKIIAHISGKLRMNFIRILPGDKVTVELSPYDLTRGRITWRAK.

Positions 1 to 72 constitute an S1-like domain; sequence MSKDDVIEMQ…TRGRITWRAK (72 aa).

It belongs to the IF-1 family. In terms of assembly, component of the 30S ribosomal translation pre-initiation complex which assembles on the 30S ribosome in the order IF-2 and IF-3, IF-1 and N-formylmethionyl-tRNA(fMet); mRNA recruitment can occur at any time during PIC assembly.

It is found in the cytoplasm. Its function is as follows. One of the essential components for the initiation of protein synthesis. Stabilizes the binding of IF-2 and IF-3 on the 30S subunit to which N-formylmethionyl-tRNA(fMet) subsequently binds. Helps modulate mRNA selection, yielding the 30S pre-initiation complex (PIC). Upon addition of the 50S ribosomal subunit IF-1, IF-2 and IF-3 are released leaving the mature 70S translation initiation complex. In Clostridium botulinum (strain ATCC 19397 / Type A), this protein is Translation initiation factor IF-1.